Consider the following 154-residue polypeptide: Ribonuclease K6 (154 aa).

An N-terminal signal peptide occupies residues 1–27 (MGPHLLGRSSLLLLLLGMWWSVRPLCA). His42 (proton acceptor) is an active-site residue. Intrachain disulfides connect Cys50–Cys108, Cys64–Cys118, Cys82–Cys133, and Cys89–Cys96. Residue Asn59 is glycosylated (N-linked (GlcNAc...) asparagine). Substrate-binding positions include 65 to 69 (KPENT) and Lys90. An N-linked (GlcNAc...) asparagine glycan is attached at Asn104. Residue His149 is the Proton donor of the active site.

It belongs to the pancreatic ribonuclease family. In terms of assembly, interacts (via N-terminus) with bacterial lipopolysaccharide (LPS). In terms of tissue distribution, kidney (at protein level).

It localises to the secreted. The protein resides in the lysosome. Its subcellular location is the cytoplasmic granule. In terms of biological role, ribonuclease which shows a preference for the pyrimidines uridine and cytosine. Has potent antimicrobial activity against a range of Gram-positive and Gram-negative bacteria, including P.aeruginosa, A.baumanii, M.luteus, S.aureus, E.faecalis, E.faecium, S.saprophyticus and E.coli. Causes loss of bacterial membrane integrity, and also promotes agglutination of Gram-negative bacteria. Probably contributes to urinary tract sterility. Bactericidal activity is independent of RNase activity. In Bos taurus (Bovine), this protein is Ribonuclease K6 (RNASE6).